The primary structure comprises 376 residues: Glutamate 5-kinase (376 aa).

Lysine 15 serves as a coordination point for ATP. Residues serine 56, aspartate 143, and asparagine 155 each contribute to the substrate site. Residue 175–176 participates in ATP binding; it reads SD. The PUA domain occupies 281 to 358; sequence KGTLTIDAGA…PDVMMILGIT (78 aa).

The protein belongs to the glutamate 5-kinase family.

The protein localises to the cytoplasm. The enzyme catalyses L-glutamate + ATP = L-glutamyl 5-phosphate + ADP. It participates in amino-acid biosynthesis; L-proline biosynthesis; L-glutamate 5-semialdehyde from L-glutamate: step 1/2. In terms of biological role, catalyzes the transfer of a phosphate group to glutamate to form L-glutamate 5-phosphate. The polypeptide is Glutamate 5-kinase (Rhodopseudomonas palustris (strain TIE-1)).